A 508-amino-acid polypeptide reads, in one-letter code: Catalase (508 aa).

Residues histidine 63 and asparagine 136 contribute to the active site. Position 346 (tyrosine 346) interacts with heme.

It belongs to the catalase family. As to quaternary structure, homohexamer. Heme is required as a cofactor.

The protein localises to the cytoplasm. It carries out the reaction 2 H2O2 = O2 + 2 H2O. Its function is as follows. Decomposes hydrogen peroxide into water and oxygen; serves to protect cells from the toxic effects of hydrogen peroxide. The chain is Catalase (katA) from Haemophilus influenzae (strain ATCC 51907 / DSM 11121 / KW20 / Rd).